The primary structure comprises 176 residues: BPTI/Kunitz inhibitor domain-containing protein C02F12.5 (176 aa).

The N-terminal stretch at 1-17 (MLFFTLLIQLFLVPVLC) is a signal peptide. The BPTI/Kunitz inhibitor domain occupies 21 to 74 (CSSELKFGTACSENKTSTKWYYDSKLLFCYPYKYLGCGEGSNSFESNENCLESC). 3 disulfides stabilise this stretch: Cys-21–Cys-74, Cys-31–Cys-57, and Cys-49–Cys-70. N-linked (GlcNAc...) asparagine glycosylation is present at Asn-34.

This chain is BPTI/Kunitz inhibitor domain-containing protein C02F12.5, found in Caenorhabditis elegans.